The following is a 1792-amino-acid chain: uncharacterized protein (1792 aa).

Over residues 1 to 28 (MNNNNNNNNNSNNNNNSNNNNNGNSNNN) the composition is skewed to low complexity. Disordered stretches follow at residues 1-34 (MNNN…SGKG), 162-187 (TNIS…SHHH), 440-461 (KKRK…NKSS), 544-568 (VIDD…SIIN), 736-777 (NKNK…INSN), 837-979 (TKGK…NDLK), 1044-1071 (VSKS…KEQS), 1084-1106 (NMNN…NDNK), 1160-1215 (TSSG…VLER), 1257-1290 (NITA…NNNG), 1651-1686 (LRSK…GRKK), 1704-1731 (PRKK…NSEK), and 1742-1761 (IENK…NLNN). Residues 169–182 (KQPISSNQHPYQQK) show a composition bias toward polar residues. Positions 550-559 (KRNKKEKKKT) are enriched in basic residues. The span at 741 to 776 (PNNINSNDNNNKNDDNNNNNNKNVDGNNNNNNNINS) shows a compositional bias: low complexity. Residues 838–847 (KGKKKGRKKK) are compositionally biased toward basic residues. Positions 856–873 (NIKEDIKSSKKDKKKDNI) are enriched in basic and acidic residues. Low complexity predominate over residues 874–924 (NDNNNDNNNDNNNDNNNDNNNDNNNDNNNDNNNNNNNNNNNNNNNNNNNHN). Residues 943–954 (KKKTRQYRKKSK) show a composition bias toward basic residues. Positions 955-966 (ITNDDNNEKIKQ) are enriched in basic and acidic residues. The segment covering 1045-1057 (SKSNIPSSFSSPP) has biased composition (low complexity). Composition is skewed to basic and acidic residues over residues 1060-1071 (TNNKNDIDKEQS), 1088-1106 (EKSK…NDNK), and 1166-1192 (NKEE…KNVD). The segment covering 1205-1215 (RKKRKKDVLER) has biased composition (basic residues). Positions 1261-1289 (NNNNDNNKNNDNDNNNNNNDNIINNNNNN) are enriched in low complexity. 2 stretches are compositionally biased toward basic residues: residues 1660 to 1686 (KEHK…GRKK) and 1704 to 1717 (PRKK…RKSK).

This is an uncharacterized protein from Plasmodium falciparum (isolate 3D7).